Here is a 265-residue protein sequence, read N- to C-terminus: GTP cyclohydrolase FolE2 (265 aa).

The protein belongs to the GTP cyclohydrolase IV family.

It catalyses the reaction GTP + H2O = 7,8-dihydroneopterin 3'-triphosphate + formate + H(+). Its pathway is cofactor biosynthesis; 7,8-dihydroneopterin triphosphate biosynthesis; 7,8-dihydroneopterin triphosphate from GTP: step 1/1. Converts GTP to 7,8-dihydroneopterin triphosphate. This Magnetococcus marinus (strain ATCC BAA-1437 / JCM 17883 / MC-1) protein is GTP cyclohydrolase FolE2.